A 211-amino-acid polypeptide reads, in one-letter code: Holliday junction resolvase RecU (211 aa).

The Mg(2+) site is built by threonine 87, aspartate 89, aspartate 102, and glutamine 121.

It belongs to the RecU family. It depends on Mg(2+) as a cofactor.

Its subcellular location is the cytoplasm. It carries out the reaction Endonucleolytic cleavage at a junction such as a reciprocal single-stranded crossover between two homologous DNA duplexes (Holliday junction).. In terms of biological role, endonuclease that resolves Holliday junction intermediates in genetic recombination. Cleaves mobile four-strand junctions by introducing symmetrical nicks in paired strands. Promotes annealing of linear ssDNA with homologous dsDNA. Required for DNA repair, homologous recombination and chromosome segregation. This chain is Holliday junction resolvase RecU, found in Limosilactobacillus fermentum (strain NBRC 3956 / LMG 18251) (Lactobacillus fermentum).